Consider the following 339-residue polypeptide: Oncoprotein MEQ (339 aa).

Positions M1–D80 are disordered. S42 is modified (phosphoserine; by host CDK2). The segment at K57–K84 is basic motif. The region spanning K57–H120 is the bZIP domain. A compositionally biased stretch (basic residues) spans L60–K77. A Nuclear localization signal motif is present at residues R62 to Q78. Residues L85–L113 are leucine-zipper. Positions H120–P339 are transactivation domain. Positions P145–P160 are enriched in pro residues. The segment at P145–I172 is disordered.

Belongs to the bZIP family. Jun subfamily. As to quaternary structure, homodimer. Interacts with host JUN; this interaction allows MEQ to engage in host cell processes by disguising itself as a cellular JUN. Post-translationally, phosphorylated by host CDK2; this phosphorylation greatly reduces the DNA binding activity of MEQ.

The protein localises to the host nucleus. It localises to the host nucleolus. Functionally, functions as a DNA-binding transcription factor. Promotes transformation, host cell growth, host cell-cycle progression through G1/S phase, and possesses antiapoptotic activity. Forms functional heterodimers with host JUN. These heterodimers bind with high affinity DNA sequences called MEQ-responsive elements MERE I (TGACA/GTCA), while MEQ homodimers bind a second type of sites termed MERE II (ACACA). Both homo and heterodimerization of MEQ are required for oncogenesis. The chain is Oncoprotein MEQ (MDV005) from Gallid herpesvirus 2 (strain Chicken/Md5/ATCC VR-987) (GaHV-2).